A 401-amino-acid chain; its full sequence is Argininosuccinate synthase (401 aa).

Residues Ala-10–Ser-18 and Ala-38 each bind ATP. Residue Tyr-89 participates in L-citrulline binding. Gly-119 is a binding site for ATP. The L-aspartate site is built by Thr-121, Asn-125, and Asp-126. Asn-125 is a binding site for L-citrulline. The L-citrulline site is built by Arg-129, Ser-177, Ser-186, Glu-262, and Tyr-274.

Belongs to the argininosuccinate synthase family. Type 1 subfamily. As to quaternary structure, homotetramer.

The protein localises to the cytoplasm. The catalysed reaction is L-citrulline + L-aspartate + ATP = 2-(N(omega)-L-arginino)succinate + AMP + diphosphate + H(+). Its pathway is amino-acid biosynthesis; L-arginine biosynthesis; L-arginine from L-ornithine and carbamoyl phosphate: step 2/3. This Microcystis aeruginosa (strain NIES-843 / IAM M-2473) protein is Argininosuccinate synthase.